We begin with the raw amino-acid sequence, 355 residues long: tRNA-specific 2-thiouridylase MnmA (355 aa).

ATP-binding positions include G7–S14 and L33. The Nucleophile role is filled by C94. The cysteines at positions 94 and 193 are disulfide-linked. G119 provides a ligand contact to ATP. The interval K143–Q145 is interaction with tRNA. The Cysteine persulfide intermediate role is filled by C193. The interval R298–Y299 is interaction with tRNA.

Belongs to the MnmA/TRMU family.

It localises to the cytoplasm. The catalysed reaction is S-sulfanyl-L-cysteinyl-[protein] + uridine(34) in tRNA + AH2 + ATP = 2-thiouridine(34) in tRNA + L-cysteinyl-[protein] + A + AMP + diphosphate + H(+). Catalyzes the 2-thiolation of uridine at the wobble position (U34) of tRNA, leading to the formation of s(2)U34. This chain is tRNA-specific 2-thiouridylase MnmA, found in Acaryochloris marina (strain MBIC 11017).